Here is a 509-residue protein sequence, read N- to C-terminus: Maturase K (509 aa).

Belongs to the intron maturase 2 family. MatK subfamily.

The protein resides in the plastid. It localises to the chloroplast. Its function is as follows. Usually encoded in the trnK tRNA gene intron. Probably assists in splicing its own and other chloroplast group II introns. The sequence is that of Maturase K from Nicotiana clevelandii (Wild tobacco).